Reading from the N-terminus, the 942-residue chain is UvrABC system protein A (942 aa).

Residue 32–39 (GLSGSGKS) participates in ATP binding. A C4-type zinc finger spans residues 251–278 (CPVCGFTVPELEPRLFSFNAPFGSCPTC). 2 consecutive ABC transporter domains span residues 308–589 (WNPI…KKSI) and 609–937 (GNGR…HYLK). 641–648 (GVSGSGKS) is an ATP binding site. The C4-type zinc finger occupies 740–766 (CEACSGDGIIKIEMHFLPDVYVPCEVC).

Belongs to the ABC transporter superfamily. UvrA family. As to quaternary structure, forms a heterotetramer with UvrB during the search for lesions.

The protein resides in the cytoplasm. In terms of biological role, the UvrABC repair system catalyzes the recognition and processing of DNA lesions. UvrA is an ATPase and a DNA-binding protein. A damage recognition complex composed of 2 UvrA and 2 UvrB subunits scans DNA for abnormalities. When the presence of a lesion has been verified by UvrB, the UvrA molecules dissociate. This Streptococcus pyogenes serotype M3 (strain ATCC BAA-595 / MGAS315) protein is UvrABC system protein A.